The primary structure comprises 503 residues: Cytochrome P450 3A43 (503 aa).

Cys442 is a heme binding site.

Belongs to the cytochrome P450 family. It depends on heme as a cofactor. In terms of tissue distribution, highest expression level in prostate. Also expressed in liver, kidney, pancreas, fetal liver and fetal skeletal muscle.

Its subcellular location is the endoplasmic reticulum membrane. It localises to the microsome membrane. It catalyses the reaction an organic molecule + reduced [NADPH--hemoprotein reductase] + O2 = an alcohol + oxidized [NADPH--hemoprotein reductase] + H2O + H(+). Its function is as follows. Exhibits low testosterone 6-beta-hydroxylase activity. The polypeptide is Cytochrome P450 3A43 (CYP3A43) (Homo sapiens (Human)).